The primary structure comprises 416 residues: D-amino acid dehydrogenase (416 aa).

Position 3-17 (Val-3–Tyr-17) interacts with FAD.

It belongs to the DadA oxidoreductase family. FAD serves as cofactor.

It catalyses the reaction a D-alpha-amino acid + A + H2O = a 2-oxocarboxylate + AH2 + NH4(+). The protein operates within amino-acid degradation; D-alanine degradation; NH(3) and pyruvate from D-alanine: step 1/1. In terms of biological role, oxidative deamination of D-amino acids. In Rhizobium johnstonii (strain DSM 114642 / LMG 32736 / 3841) (Rhizobium leguminosarum bv. viciae), this protein is D-amino acid dehydrogenase.